A 294-amino-acid chain; its full sequence is Ethanolamine ammonia-lyase small subunit (294 aa).

Positions 207 and 228 each coordinate adenosylcob(III)alamin.

This sequence belongs to the EutC family. The basic unit is a heterodimer which dimerizes to form tetramers. The heterotetramers trimerize; 6 large subunits form a core ring with 6 small subunits projecting outwards. It depends on adenosylcob(III)alamin as a cofactor.

It localises to the bacterial microcompartment. It carries out the reaction ethanolamine = acetaldehyde + NH4(+). Its pathway is amine and polyamine degradation; ethanolamine degradation. In terms of biological role, catalyzes the deamination of various vicinal amino-alcohols to oxo compounds. Allows this organism to utilize ethanolamine as the sole source of nitrogen and carbon in the presence of external vitamin B12. The protein is Ethanolamine ammonia-lyase small subunit of Clostridium tetani (strain Massachusetts / E88).